The chain runs to 513 residues: Maturase K (513 aa).

The protein belongs to the intron maturase 2 family. MatK subfamily.

The protein localises to the plastid. It is found in the chloroplast. In terms of biological role, usually encoded in the trnK tRNA gene intron. Probably assists in splicing its own and other chloroplast group II introns. The sequence is that of Maturase K from Cynodon dactylon (Bermuda grass).